The following is a 249-amino-acid chain: Exosome complex component Rrp41 (249 aa).

It belongs to the RNase PH family. Rrp41 subfamily. As to quaternary structure, component of the archaeal exosome complex. Forms a hexameric ring-like arrangement composed of 3 Rrp41-Rrp42 heterodimers. The hexameric ring associates with a trimer of Rrp4 and/or Csl4 subunits.

The protein resides in the cytoplasm. Its function is as follows. Catalytic component of the exosome, which is a complex involved in RNA degradation. Has 3'-&gt;5' exoribonuclease activity. Can also synthesize heteromeric RNA-tails. This chain is Exosome complex component Rrp41, found in Pyrococcus horikoshii (strain ATCC 700860 / DSM 12428 / JCM 9974 / NBRC 100139 / OT-3).